Consider the following 65-residue polypeptide: Large ribosomal subunit protein bL35 (65 aa).

The protein belongs to the bacterial ribosomal protein bL35 family.

The protein is Large ribosomal subunit protein bL35 of Xanthomonas campestris pv. campestris (strain ATCC 33913 / DSM 3586 / NCPPB 528 / LMG 568 / P 25).